The following is a 252-amino-acid chain: Secreted LysM effector LysM1 (252 aa).

Positions 20–64 (FAIPGDPGDTCDTLSDRWGITIDIFKSLNPGVNCPNLVANMEYCV) constitute a LysM 1 domain. Residues 71–98 (DTPSTTTTAKPTMTPTSTPTKTTTTSTA) are disordered. Residues 72 to 98 (TPSTTTTAKPTMTPTSTPTKTTTTSTA) show a composition bias toward low complexity. 2 LysM domains span residues 126-172 (KFHL…YVCV) and 204-250 (KFHL…YVCI).

Belongs to the secreted LysM effector family.

It is found in the secreted. The protein resides in the cell wall. In terms of biological role, secreted effector that binds two substrates, chitin and N-linked oligosaccharides associated with human skin glycoproteins. Could provide the pathogen with three important functions including shielding host cell wall chitin from the human immune system, shielding the pathogen's glycoproteins from host degradation and immune surveillance, and helping facilitate pathogen adhesion to human skin. This is Secreted LysM effector LysM1 from Trichophyton rubrum (strain ATCC MYA-4607 / CBS 118892) (Athlete's foot fungus).